Reading from the N-terminus, the 101-residue chain is NAD(P)H-quinone oxidoreductase subunit 4L, chloroplastic (101 aa).

A run of 3 helical transmembrane segments spans residues 2–22 (ILEH…YGLI), 32–52 (MCLE…SDFF), and 61–81 (IFCI…LAIV).

Belongs to the complex I subunit 4L family. NDH is composed of at least 16 different subunits, 5 of which are encoded in the nucleus.

The protein resides in the plastid. Its subcellular location is the chloroplast thylakoid membrane. The enzyme catalyses a plastoquinone + NADH + (n+1) H(+)(in) = a plastoquinol + NAD(+) + n H(+)(out). The catalysed reaction is a plastoquinone + NADPH + (n+1) H(+)(in) = a plastoquinol + NADP(+) + n H(+)(out). Functionally, NDH shuttles electrons from NAD(P)H:plastoquinone, via FMN and iron-sulfur (Fe-S) centers, to quinones in the photosynthetic chain and possibly in a chloroplast respiratory chain. The immediate electron acceptor for the enzyme in this species is believed to be plastoquinone. Couples the redox reaction to proton translocation, and thus conserves the redox energy in a proton gradient. The chain is NAD(P)H-quinone oxidoreductase subunit 4L, chloroplastic from Crucihimalaya wallichii (Rock-cress).